A 1129-amino-acid chain; its full sequence is MQKMQCHLRRPLHSSSSFSSQAVMMTKPMQEHKKEYTAQQALFRPSGIVTSIPVPLAGSALLPYHVSSTLYQSKSLSSSEHNKANGGSPQEHIAMESSAEEVDCFKNTCLPSELSPCSQNDFKPTNGDIDMQSPSKLMSGSMIISNFSTAMVHTIVNETLESMTSFKATKPVDTNADYLTKTIKGKPVLSLCDQAAPQQNKASSKDMFAEHLSKSIIKHSLDKSKSVLPNIDKKPVSKEHMLVLGEESQLTLGETPKFLDFSDNSPQYCVPECKDSVGFGFSLEALPPCSMMTSQKSDLKGVMKDKVVTRHNLTNTAFEPLSFGQESSFRPSQTLSSAVLTCVDSLHVEDKQKIRDRNVIPDTPPSTPLVPSQTSSEWDIKKLTKQLKGELAKEFAPATPPSTPHNSSVGSLSENEQTTIEKEEFMLKLMRSLSEEVESSEGEEHPEMDVKSEHSGKKGQFADALATHIISLATEVAASHLDHEITQEFKVQNSHLTVPSQRSMLPALSHSDESIQTCSFASDMAAGVIAEAEKVANTRSCMLFGHERTICHVEGDRGKAEEKLDVEDIAHPREVETCVLSLPSCMPGLTYKYPSCESVTDEYAGHIIQVLKQEGGNSELIMDQYASRLAYRSVKSGVREAAKTVKVKCSLKLFPMHTSHVKTNKELLFSSKEHHQEVDKKRQRKKYGSHPCKYQTCDRTQDPCRNELSELYRFSASLASSITRDVKKQLTAPKVDLPKSSTDCCLFEKSECVDNRENVTGPEFSKSCQPLQNHGLCQNTSSLSGYSCGESAHTVEQYARKVVGDTLELSLGPAVFLNSETTTSPDRITYAEKLSPLINEACRYCDLKESHGCIRNSAQLFSKQGPCASAKPSSHSKLSSIRQKSRIFHLDVPQIHLNLDKRAVLAEKIVAEAIEKAERELSNTSLAADSGIGQDGISFAESLTTEIMTTAMTNAGHAVSSSKEVEDFQSTESLGSQQMNLSVGEDSTGSWSNLSFEDDHQDESSSFHHLSESSNGNSSSWSSLGLEGDLYENNLSFPTSDSDGPDDRESEQEDGAEGLQPSGKTLLIVNIDVEPGAVDPQLRVILQWLIPRRRKLENFIFSTLQRRSLSYFQSSYRREDGKWAMSCRL.

Basic residues predominate over residues 1–12; the sequence is MQKMQCHLRRPL. Residues 1 to 21 are disordered; that stretch reads MQKMQCHLRRPLHSSSSFSSQ. A phosphothreonine mark is found at Thr251 and Thr363. Disordered regions lie at residues 354-376, 394-416, and 434-455; these read IRDRNVIPDTPPSTPLVPSQTSS, EFAPATPPSTPHNSSVGSLSENE, and SEEVESSEGEEHPEMDVKSEHS. Positions 404-416 are enriched in polar residues; the sequence is PHNSSVGSLSENE. Phosphoserine occurs at positions 434, 439, and 440. Residues 442–455 show a composition bias toward basic and acidic residues; it reads GEEHPEMDVKSEHS. A Phosphoserine modification is found at Ser595. At Thr742 the chain carries Phosphothreonine. Ser835 carries the post-translational modification Phosphoserine. Positions 905-918 are PKA-RII binding region; that stretch reads LAEKIVAEAIEKAE. Residues 962–1061 form a disordered region; it reads SKEVEDFQST…QEDGAEGLQP (100 aa). Positions 968-995 are enriched in polar residues; sequence FQSTESLGSQQMNLSVGEDSTGSWSNLS. Residues 1002 to 1011 show a composition bias toward basic and acidic residues; sequence DESSSFHHLS. Low complexity predominate over residues 1012 to 1028; that stretch reads ESSNGNSSSWSSLGLEG. Residues 1033–1042 show a composition bias toward polar residues; that stretch reads NNLSFPTSDS. A compositionally biased stretch (acidic residues) spans 1043-1056; sequence DGPDDRESEQEDGA.

As to expression, expressed in brain and testis.

It is found in the peroxisome. Functionally, binds to type II regulatory subunits of protein kinase A and anchors/targets them. The protein is A-kinase anchor protein 11 (Akap11) of Rattus norvegicus (Rat).